Consider the following 72-residue polypeptide: UPF0270 protein YheU (72 aa).

Belongs to the UPF0270 family.

This Escherichia fergusonii (strain ATCC 35469 / DSM 13698 / CCUG 18766 / IAM 14443 / JCM 21226 / LMG 7866 / NBRC 102419 / NCTC 12128 / CDC 0568-73) protein is UPF0270 protein YheU.